Consider the following 166-residue polypeptide: NADH-ubiquinone oxidoreductase chain 6 (166 aa).

5 helical membrane-spanning segments follow: residues 1 to 21, 26 to 46, 47 to 67, 86 to 106, and 139 to 159; these read MMYF…AFAS, IYGG…IVSL, GGSF…LVVF, TVVL…YEFF, and CGGW…FVVL.

The protein belongs to the complex I subunit 6 family. In terms of assembly, core subunit of respiratory chain NADH dehydrogenase (Complex I) which is composed of 45 different subunits.

Its subcellular location is the mitochondrion inner membrane. It catalyses the reaction a ubiquinone + NADH + 5 H(+)(in) = a ubiquinol + NAD(+) + 4 H(+)(out). In terms of biological role, core subunit of the mitochondrial membrane respiratory chain NADH dehydrogenase (Complex I) which catalyzes electron transfer from NADH through the respiratory chain, using ubiquinone as an electron acceptor. Essential for the catalytic activity and assembly of complex I. In Tachyglossus aculeatus aculeatus (Southeast Australian short-beaked echidna), this protein is NADH-ubiquinone oxidoreductase chain 6 (MT-ND6).